A 405-amino-acid chain; its full sequence is Elongation factor Tu (405 aa).

The tr-type G domain occupies 10–213 (KEHVNVGTIG…AMDEYIPTPE (204 aa)). The interval 19–26 (GHVDHGKS) is G1. Residue 19-26 (GHVDHGKS) participates in GTP binding. Position 26 (S26) interacts with Mg(2+). Residues 64–68 (GITIN) form a G2 region. Residues 85-88 (DCPG) are G3. Residues 85–89 (DCPGH) and 140–143 (NKCD) each bind GTP. The tract at residues 140 to 143 (NKCD) is G4. The G5 stretch occupies residues 178–180 (SAL).

It belongs to the TRAFAC class translation factor GTPase superfamily. Classic translation factor GTPase family. EF-Tu/EF-1A subfamily. In terms of assembly, monomer.

The protein resides in the cytoplasm. The enzyme catalyses GTP + H2O = GDP + phosphate + H(+). Functionally, GTP hydrolase that promotes the GTP-dependent binding of aminoacyl-tRNA to the A-site of ribosomes during protein biosynthesis. The protein is Elongation factor Tu of Aquifex pyrophilus.